The sequence spans 456 residues: tRNA modification GTPase MnmE (456 aa).

(6S)-5-formyl-5,6,7,8-tetrahydrofolate contacts are provided by Arg-25, Glu-82, and Lys-121. One can recognise a TrmE-type G domain in the interval 217–379 (GIKVVIIGKP…LLDEIVKIAG (163 aa)). Asn-227 is a binding site for K(+). Residues 227–232 (NAGKSS), 246–252 (TDIAGTT), and 271–274 (DTAG) contribute to the GTP site. Ser-231 serves as a coordination point for Mg(2+). Residues Thr-246, Ile-248, and Thr-251 each coordinate K(+). Thr-252 lines the Mg(2+) pocket. Lys-456 provides a ligand contact to (6S)-5-formyl-5,6,7,8-tetrahydrofolate.

The protein belongs to the TRAFAC class TrmE-Era-EngA-EngB-Septin-like GTPase superfamily. TrmE GTPase family. As to quaternary structure, homodimer. Heterotetramer of two MnmE and two MnmG subunits. K(+) serves as cofactor.

The protein localises to the cytoplasm. Exhibits a very high intrinsic GTPase hydrolysis rate. Involved in the addition of a carboxymethylaminomethyl (cmnm) group at the wobble position (U34) of certain tRNAs, forming tRNA-cmnm(5)s(2)U34. The polypeptide is tRNA modification GTPase MnmE (Endomicrobium trichonymphae).